The chain runs to 129 residues: Capsid protein (129 aa).

Positions Glu31–Ile104 are viral RNA-binding.

The protein belongs to the Leviviricetes capsid protein family. In terms of assembly, homodimer. The capsid proteins form dimers that assemble by group of 5. Twelve such pentamers are linked together with free dimers. The homodimers binds to the viral RNA via an operator hairpin, but also to many other RNA sequences in the viral genome; this interaction probably shifts the virus from the replicative to the assembly phase and ensures specific encapsidation of the viral genome.

The protein resides in the virion. Its function is as follows. Capsid protein self-assembles to form an icosahedral capsid with a T=3 symmetry, about 26 nm in diameter, and consisting of 89 capsid proteins dimers (178 capsid proteins). Involved in viral genome encapsidation through the interaction between a capsid protein dimer and the multiple packaging signals present in the RNA genome. The capsid also contains 1 copy of the A2 maturation protein. In terms of biological role, acts as a translational repressor of viral replicase synthesis late in infection. This latter function is the result of capsid protein interaction with an RNA hairpin which contains the replicase ribosome-binding site. The chain is Capsid protein from Enterobacteria phage f2 (Bacteriophage f2).